A 359-amino-acid polypeptide reads, in one-letter code: Pyruvate dehydrogenase E1 component subunit beta, mitochondrial (359 aa).

A mitochondrion-targeting transit peptide spans 1-19 (MLGVIRNKTIRPSFSAFRF). Thiamine diphosphate is bound at residue glutamate 82. Positions 135, 183, 184, and 186 each coordinate K(+).

As to quaternary structure, tetramer of 2 alpha and 2 beta subunits. Requires thiamine diphosphate as cofactor.

It localises to the mitochondrion matrix. The catalysed reaction is N(6)-[(R)-lipoyl]-L-lysyl-[protein] + pyruvate + H(+) = N(6)-[(R)-S(8)-acetyldihydrolipoyl]-L-lysyl-[protein] + CO2. In terms of biological role, the pyruvate dehydrogenase complex catalyzes the overall conversion of pyruvate to acetyl-CoA and CO(2). It contains multiple copies of three enzymatic components: pyruvate dehydrogenase (E1), dihydrolipoamide acetyltransferase (E2) and lipoamide dehydrogenase (E3). This Pisum sativum (Garden pea) protein is Pyruvate dehydrogenase E1 component subunit beta, mitochondrial.